Reading from the N-terminus, the 1383-residue chain is DNA-directed RNA polymerase subunit beta (1383 aa).

The protein belongs to the RNA polymerase beta chain family. The RNAP catalytic core consists of 2 alpha, 1 beta, 1 beta' and 1 omega subunit. When a sigma factor is associated with the core the holoenzyme is formed, which can initiate transcription.

It catalyses the reaction RNA(n) + a ribonucleoside 5'-triphosphate = RNA(n+1) + diphosphate. DNA-dependent RNA polymerase catalyzes the transcription of DNA into RNA using the four ribonucleoside triphosphates as substrates. In Bartonella quintana (strain Toulouse) (Rochalimaea quintana), this protein is DNA-directed RNA polymerase subunit beta.